Here is a 64-residue protein sequence, read N- to C-terminus: H/ACA ribonucleoprotein complex subunit 3-like protein (64 aa).

It belongs to the NOP10 family. As to quaternary structure, component of the small nucleolar ribonucleoprotein particles containing H/ACA-type snoRNAs (H/ACA snoRNPs).

It localises to the nucleus. The protein resides in the nucleolus. Its function is as follows. Required for ribosome biogenesis. Part of a complex which catalyzes pseudouridylation of rRNA. This involves the isomerization of uridine such that the ribose is subsequently attached to C5, instead of the normal N1. Pseudouridine ('psi') residues may serve to stabilize the conformation of rRNAs. In Arabidopsis thaliana (Mouse-ear cress), this protein is H/ACA ribonucleoprotein complex subunit 3-like protein.